The following is a 191-amino-acid chain: UPF0149 protein plu3602 (191 aa).

It belongs to the UPF0149 family.

The protein is UPF0149 protein plu3602 of Photorhabdus laumondii subsp. laumondii (strain DSM 15139 / CIP 105565 / TT01) (Photorhabdus luminescens subsp. laumondii).